The following is a 174-amino-acid chain: Gamma-crystallin S (174 aa).

2 Beta/gamma crystallin 'Greek key' domains span residues 2-40 (GRII…RVES) and 41-83 (GAWV…KMIH). The segment at 84–89 (FVSGSE) is connecting peptide. Beta/gamma crystallin 'Greek key' domains are found at residues 90-130 (YKIQ…KVLD) and 131-173 (GIWI…KRLM).

Belongs to the beta/gamma-crystallin family.

Functionally, crystallins are the dominant structural components of the vertebrate eye lens. The protein is Gamma-crystallin S (crygs) of Cyprinus carpio (Common carp).